Reading from the N-terminus, the 144-residue chain is Large ribosomal subunit protein uL13 (144 aa).

Belongs to the universal ribosomal protein uL13 family. As to quaternary structure, part of the 50S ribosomal subunit.

In terms of biological role, this protein is one of the early assembly proteins of the 50S ribosomal subunit, although it is not seen to bind rRNA by itself. It is important during the early stages of 50S assembly. This chain is Large ribosomal subunit protein uL13, found in Pelotomaculum thermopropionicum (strain DSM 13744 / JCM 10971 / SI).